The primary structure comprises 249 residues: Electron transfer flavoprotein subunit beta (249 aa).

Belongs to the ETF beta-subunit/FixA family. Heterodimer of an alpha and a beta subunit. FAD is required as a cofactor. AMP serves as cofactor.

In terms of biological role, the electron transfer flavoprotein serves as a specific electron acceptor for other dehydrogenases. It transfers the electrons to the main respiratory chain via ETF-ubiquinone oxidoreductase (ETF dehydrogenase). In Pseudomonas aeruginosa (strain ATCC 15692 / DSM 22644 / CIP 104116 / JCM 14847 / LMG 12228 / 1C / PRS 101 / PAO1), this protein is Electron transfer flavoprotein subunit beta (etfB).